Here is a 39-residue protein sequence, read N- to C-terminus: Photosystem II reaction center protein X (39 aa).

Residues 10-30 (WSLVLGAAIVLIPATIGLIFI) traverse the membrane as a helical segment.

Belongs to the PsbX family. Type 1 subfamily. In terms of assembly, PSII is composed of 1 copy each of membrane proteins PsbA, PsbB, PsbC, PsbD, PsbE, PsbF, PsbH, PsbI, PsbJ, PsbK, PsbL, PsbM, PsbT, PsbX, PsbY, PsbZ, Psb30/Ycf12, peripheral proteins PsbO, CyanoQ (PsbQ), PsbU, PsbV and a large number of cofactors. It forms dimeric complexes.

Its subcellular location is the cellular thylakoid membrane. Involved in the binding and/or turnover of quinones at the Q(B) site of photosystem II (PSII). PSII is a light-driven water plastoquinone oxidoreductase, using light energy to abstract electrons from H(2)O, generating a proton gradient subsequently used for ATP formation. The polypeptide is Photosystem II reaction center protein X (Microcystis aeruginosa (strain NIES-843 / IAM M-2473)).